The following is a 309-amino-acid chain: uncharacterized protein (309 aa).

Residues 23–39 (RFNVAIIGGTGGLGRAI) form a helical membrane-spanning segment.

This sequence belongs to the NmrA-type oxidoreductase family.

The protein localises to the membrane. This is an uncharacterized protein from Saccharomyces cerevisiae (strain ATCC 204508 / S288c) (Baker's yeast).